Consider the following 213-residue polypeptide: MLACIACSSKEGGEDGSRGAATPHGRDAVKSLTSQLKDMVLKFSGSNKHQHYKAATAGSPSFRSRSYRRPYPGFIDDSAFMTTTRPGGEAYMYTRAAPPPPVRAASTSMATWDMTRSKSNRGWQQDAGRSPGGTTWIQSIEEEAGADDVTVVEDAVPREWTAQVEPGVQITFVTLPGGGNDLKRIRFSRERFGEDRAKVWWEHNRDRIQAQYL.

The interval 7–27 (CSSKEGGEDGSRGAATPHGRD) is disordered. In terms of domain architecture, BRX spans 158–213 (REWTAQVEPGVQITFVTLPGGGNDLKRIRFSRERFGEDRAKVWWEHNRDRIQAQYL).

Belongs to the BRX family.

Its subcellular location is the nucleus. This Oryza sativa subsp. japonica (Rice) protein is Putative protein Brevis radix-like 3 (BRXL3).